Here is a 96-residue protein sequence, read N- to C-terminus: Co-chaperonin GroES (96 aa).

The protein belongs to the GroES chaperonin family. Heptamer of 7 subunits arranged in a ring. Interacts with the chaperonin GroEL.

The protein resides in the cytoplasm. Its function is as follows. Together with the chaperonin GroEL, plays an essential role in assisting protein folding. The GroEL-GroES system forms a nano-cage that allows encapsulation of the non-native substrate proteins and provides a physical environment optimized to promote and accelerate protein folding. GroES binds to the apical surface of the GroEL ring, thereby capping the opening of the GroEL channel. The protein is Co-chaperonin GroES of Shewanella sediminis (strain HAW-EB3).